The primary structure comprises 184 residues: Der GTPase-activating protein YihI (184 aa).

Disordered regions lie at residues 1–106 (MNRP…PTMS) and 159–184 (LGDDDEEEQQEDMLQLLKRNNPKDAL). The span at 8–32 (VADKAEKSKVKRKTREELEREARER) shows a compositional bias: basic and acidic residues. The span at 159–169 (LGDDDEEEQQE) shows a compositional bias: acidic residues.

It belongs to the YihI family. As to quaternary structure, interacts with Der.

Functionally, a GTPase-activating protein (GAP) that modifies Der/EngA GTPase function. May play a role in ribosome biogenesis. The sequence is that of Der GTPase-activating protein YihI from Pectobacterium atrosepticum (strain SCRI 1043 / ATCC BAA-672) (Erwinia carotovora subsp. atroseptica).